A 206-amino-acid chain; its full sequence is MTDTAASASQPALVRNELNLVWLDMEMTGLDPDNDRIIEIAVVVTNSTLDIAVEGPVFAIHQSDETLAKMDDWNKSTHGRSGLIDRVRASTVTEAEAAAQLQAFLAQYVSPGKSPMCGNSICQDRRFMARWMPEFERFFHYRNLDVSTLKELCRRWQPAIYKGFQKRAMHTALADIHESIDELKYYREHFLIPAASVSAGESAPAA.

The 164-residue stretch at 20-183 folds into the Exonuclease domain; sequence LVWLDMEMTG…ADIHESIDEL (164 aa). Tyr141 is a catalytic residue.

The protein belongs to the oligoribonuclease family.

The protein localises to the cytoplasm. Its function is as follows. 3'-to-5' exoribonuclease specific for small oligoribonucleotides. This Burkholderia cenocepacia (strain HI2424) protein is Oligoribonuclease.